A 473-amino-acid polypeptide reads, in one-letter code: Lactate utilization protein B (473 aa).

2 4Fe-4S ferredoxin-type domains span residues 302-332 and 351-380; these read GSEF…GHSY and YDDY…LHDL. [4Fe-4S] cluster contacts are provided by Cys-311, Cys-314, Cys-317, Cys-321, Cys-364, Cys-367, and Cys-371.

It belongs to the LutB/YkgF family.

Its function is as follows. Is involved in L-lactate degradation and allows cells to grow with lactate as the sole carbon source. Has probably a role as an electron transporter during oxidation of L-lactate. The protein is Lactate utilization protein B of Bacillus cytotoxicus (strain DSM 22905 / CIP 110041 / 391-98 / NVH 391-98).